A 302-amino-acid chain; its full sequence is Myb-related protein Hv33 (302 aa).

HTH myb-type domains follow at residues 11–63 (QPKV…INYL) and 64–118 (RPDL…KKKL). 2 DNA-binding regions (H-T-H motif) span residues 39-63 (WSSVPRLAALNRCGKSCRLRWINYL) and 91-114 (WSQIASHLPGRTDNEIKNFWNSCI). The tract at residues 137-158 (ATAAAALPDAEEEDRKPLCPAV) is disordered.

Germinating seed and apical meristem of shoot and root.

The protein localises to the nucleus. Possible transcription activator in response to an external signal. May be involved in the regulation of flavonoid biosynthesis. The sequence is that of Myb-related protein Hv33 (MYB2) from Hordeum vulgare (Barley).